A 495-amino-acid chain; its full sequence is Cobyric acid synthase (495 aa).

In terms of domain architecture, GATase cobBQ-type spans 250 to 444 (SLKISILRLP…LHGLFDNGAW (195 aa)). Catalysis depends on Cys-331, which acts as the Nucleophile. His-436 is a catalytic residue.

It belongs to the CobB/CobQ family. CobQ subfamily.

It participates in cofactor biosynthesis; adenosylcobalamin biosynthesis. In terms of biological role, catalyzes amidations at positions B, D, E, and G on adenosylcobyrinic A,C-diamide. NH(2) groups are provided by glutamine, and one molecule of ATP is hydrogenolyzed for each amidation. The polypeptide is Cobyric acid synthase (Rippkaea orientalis (strain PCC 8801 / RF-1) (Cyanothece sp. (strain PCC 8801))).